We begin with the raw amino-acid sequence, 88 residues long: Kunitz-type U15-theraphotoxin-Hs1f (88 aa).

The first 27 residues, 1-27 (MGTARFLSAVLLLSVLLMVTFPALLSA), serve as a signal peptide directing secretion. The propeptide occupies 28–33 (EYHDGR). The BPTI/Kunitz inhibitor domain maps to 37–85 (CSLPSDSGDCLRLFEMWYFDGTTCTKFVYGGYGGNDNRFPTEKACMKRC). 2 cysteine pairs are disulfide-bonded: C37–C85 and C60–C81.

The protein belongs to the venom Kunitz-type family. 03 (sub-Kunitz) subfamily. As to expression, expressed by the venom gland.

Its subcellular location is the secreted. Serine protease inhibitor that inhibits trypsin at a molar ratio of 1:1. The chain is Kunitz-type U15-theraphotoxin-Hs1f from Cyriopagopus schmidti (Chinese bird spider).